The primary structure comprises 142 residues: MKTFVAKPHEVKRDWFVIDAKGKVLGRVASEVAHRLRGKHKPEFTPHVDTGDYIVIINAADIVVTGNKAQDKKYFRHTTYPGGIRETNFEKMQQRFPGRAIQKAVKGMLPKGPLGYAMIKKLKVYAGAEHPHTAQQPKPLEF.

Belongs to the universal ribosomal protein uL13 family. Part of the 50S ribosomal subunit.

Functionally, this protein is one of the early assembly proteins of the 50S ribosomal subunit, although it is not seen to bind rRNA by itself. It is important during the early stages of 50S assembly. The sequence is that of Large ribosomal subunit protein uL13 from Bordetella bronchiseptica (strain ATCC BAA-588 / NCTC 13252 / RB50) (Alcaligenes bronchisepticus).